Reading from the N-terminus, the 491-residue chain is Carbohydrate ABC transporter substrate-binding protein (491 aa).

The Zn(2+) site is built by aspartate 212, histidine 247, histidine 252, and glutamate 256.

The protein belongs to the bacterial solute-binding protein 1 family. Exists as a monomer, homodimer, homotrimer and homotetramer; oligomerization increases with higher protein concentration.

The protein localises to the cell surface. Functionally, probably part of an ABC transporter complex involved in carbohydrate transport. This is Carbohydrate ABC transporter substrate-binding protein from Streptococcus pneumoniae serotype 4 (strain ATCC BAA-334 / TIGR4).